A 294-amino-acid polypeptide reads, in one-letter code: ATP synthase gamma chain (294 aa).

The protein belongs to the ATPase gamma chain family. In terms of assembly, F-type ATPases have 2 components, CF(1) - the catalytic core - and CF(0) - the membrane proton channel. CF(1) has five subunits: alpha(3), beta(3), gamma(1), delta(1), epsilon(1). CF(0) has three main subunits: a, b and c.

It localises to the cell inner membrane. In terms of biological role, produces ATP from ADP in the presence of a proton gradient across the membrane. The gamma chain is believed to be important in regulating ATPase activity and the flow of protons through the CF(0) complex. In Rhizobium johnstonii (strain DSM 114642 / LMG 32736 / 3841) (Rhizobium leguminosarum bv. viciae), this protein is ATP synthase gamma chain.